Reading from the N-terminus, the 247-residue chain is E3 SUMO-protein ligase NSE2 (247 aa).

An N-acetylmethionine modification is found at Met-1. Glycyl lysine isopeptide (Lys-Gly) (interchain with G-Cter in SUMO2) cross-links involve residues Lys-90 and Lys-107. Ser-116 is modified (phosphoserine). Glycyl lysine isopeptide (Lys-Gly) (interchain with G-Cter in SUMO2) cross-links involve residues Lys-125 and Lys-130. The SP-RING-type zinc-finger motif lies at 154-240; it reads VDEDIIVTQS…LRRAIENHNK (87 aa). Residues Cys-185, His-187, Cys-210, and Cys-215 each coordinate Zn(2+).

This sequence belongs to the NSE2 family. As to quaternary structure, component of the SMC5-SMC6 complex which consists at least of SMC5, SMC6, NSMCE2, NSMCE1, NSMCE4A or EID3 and NSMCE3. In terms of processing, sumoylated, possibly via autosumoylation.

The protein localises to the nucleus. It localises to the chromosome. The protein resides in the telomere. Its subcellular location is the PML body. It participates in protein modification; protein sumoylation. In terms of biological role, E3 SUMO-protein ligase component of the SMC5-SMC6 complex, a complex involved in DNA double-strand break repair by homologous recombination. Is not be required for the stability of the complex. The complex may promote sister chromatid homologous recombination by recruiting the SMC1-SMC3 cohesin complex to double-strand breaks. The complex is required for telomere maintenance via recombination in ALT (alternative lengthening of telomeres) cell lines and mediates sumoylation of shelterin complex (telosome) components which is proposed to lead to shelterin complex disassembly in ALT-associated PML bodies (APBs). Acts as an E3 ligase mediating SUMO attachment to various proteins such as SMC6L1 and TSNAX, the shelterin complex subunits TERF1, TERF2, TINF2 and TERF2IP, RAD51AP1, and maybe the cohesin components RAD21 and STAG2. Required for recruitment of telomeres to PML nuclear bodies. SUMO protein-ligase activity is required for the prevention of DNA damage-induced apoptosis by facilitating DNA repair, and for formation of APBs in ALT cell lines. Required for sister chromatid cohesion during prometaphase and mitotic progression. This Homo sapiens (Human) protein is E3 SUMO-protein ligase NSE2 (NSMCE2).